The following is a 209-amino-acid chain: Ribosomal RNA large subunit methyltransferase E (209 aa).

S-adenosyl-L-methionine-binding residues include Gly-63, Trp-65, Asp-83, Asp-99, and Asp-124. Catalysis depends on Lys-164, which acts as the Proton acceptor.

The protein belongs to the class I-like SAM-binding methyltransferase superfamily. RNA methyltransferase RlmE family.

It localises to the cytoplasm. The enzyme catalyses uridine(2552) in 23S rRNA + S-adenosyl-L-methionine = 2'-O-methyluridine(2552) in 23S rRNA + S-adenosyl-L-homocysteine + H(+). Its function is as follows. Specifically methylates the uridine in position 2552 of 23S rRNA at the 2'-O position of the ribose in the fully assembled 50S ribosomal subunit. In Buchnera aphidicola subsp. Cinara cedri (strain Cc), this protein is Ribosomal RNA large subunit methyltransferase E.